A 381-amino-acid polypeptide reads, in one-letter code: Acetylornithine deacetylase (381 aa).

Histidine 79 is a Zn(2+) binding site. Residue aspartate 81 is part of the active site. Residue aspartate 111 participates in Zn(2+) binding. Glutamate 143 is a catalytic residue. Glutamate 144, glutamate 168, and histidine 354 together coordinate Zn(2+).

It belongs to the peptidase M20A family. ArgE subfamily. Homodimer. Zn(2+) serves as cofactor. The cofactor is Co(2+). Requires glutathione as cofactor.

Its subcellular location is the cytoplasm. The enzyme catalyses N(2)-acetyl-L-ornithine + H2O = L-ornithine + acetate. It functions in the pathway amino-acid biosynthesis; L-arginine biosynthesis; L-ornithine from N(2)-acetyl-L-ornithine (linear): step 1/1. Catalyzes the hydrolysis of the amide bond of N(2)-acetylated L-amino acids. Cleaves the acetyl group from N-acetyl-L-ornithine to form L-ornithine, an intermediate in L-arginine biosynthesis pathway, and a branchpoint in the synthesis of polyamines. The polypeptide is Acetylornithine deacetylase (Buchnera aphidicola subsp. Acyrthosiphon pisum (strain APS) (Acyrthosiphon pisum symbiotic bacterium)).